Here is a 147-residue protein sequence, read N- to C-terminus: Cytochrome c' (147 aa).

An N-terminal signal peptide occupies residues 1–21 (MKRMMIVAALAALTTTTVAQA). Residues arginine 31, threonine 87, glutamate 88, cysteine 137, cysteine 140, and histidine 141 each coordinate heme c.

Homodimer. Post-translationally, binds 1 heme c group covalently per subunit.

In terms of biological role, cytochrome c' is the most widely occurring bacterial c-type cytochrome. Cytochromes c' are high-spin proteins and the heme has no sixth ligand. Their exact function is not known. In Rhodospirillum rubrum (strain ATCC 11170 / ATH 1.1.1 / DSM 467 / LMG 4362 / NCIMB 8255 / S1), this protein is Cytochrome c'.